The primary structure comprises 1499 residues: Condensin complex subunit 1 (1499 aa).

Disordered stretches follow at residues 1-43 and 1421-1499; these read MPRK…DGLS and ITKN…MLDD. The span at 1432–1446 shows a compositional bias: low complexity; that stretch reads PTTMSGSSRTTSRAA. 2 stretches are compositionally biased toward acidic residues: residues 1458–1467 and 1486–1499; these read SDEDDSDSDD and ADDDSDSDEFMLDD.

This sequence belongs to the CND1 (condensin subunit 1) family. As to quaternary structure, component of the condensin I complex, which contains the mix-1/SMC2 and smc-4/SMC4 heterodimer, and three non SMC subunits that probably regulate the complex: dpy-26, capg-1 and dpy-28. Within the complex, interacts with dpy-26 and smc-4. Component of the dosage compensation complex, which consist of the condensin I like components mix-1/SMC2 and dpy-27/SMC4, and the three non SMC subunits dpy-26, capg-1 and dpy-28. Within the complex, interacts with mix-1, dpy-27, dpy-26 and capg-1. Interacts with smcl-1. Post-translationally, sumoylated. Sumoylated in the context of the dosage compensation complex but not in the condensin I complex. Sumoylation is important for assembly of the dosage compensation complex and its robust binding to the X chromosome. In terms of tissue distribution, expressed in somatic and germline tissues (at protein level).

The protein localises to the nucleus. The protein resides in the chromosome. Its function is as follows. Required for both chromosome condensation and segregation during mitosis and meiosis and X-chromosome dosage compensation depending on its binding partners. Regulatory subunit of the condensin I complex, a complex required for conversion of interphase chromatin into mitotic-like condense chromosomes. The condensin I complex probably introduces positive supercoils into relaxed DNA in the presence of type I topoisomerases and converts nicked DNA into positive knotted forms in the presence of type II topoisomerases. The condensin I complex function is required for proper chromosome segregation in mitosis and meiosis. As a member of the condensin I complex, further controls the crossover number and distribution in meiosis by restricting double strand break formation, possibly by influencing higher-order chromosome structure. Plays a role in robust cytokinesis upon presence of chromatin obstructions. Also a member of the condensin I-like dosage compensation complex that associates specifically with hermaphrodite X chromosomes to reduce their gene transcription during interphase, possibly through chromatin reorganization. This Caenorhabditis elegans protein is Condensin complex subunit 1.